Consider the following 186-residue polypeptide: MGLFDKLAGWLGLKKKEVNVLCLGLDNSGKTTIINQLKPSNAQAQDIVPTIGFSIEKFKTSSLSFTVFDMSGQGRYRNLWEHYYKEGQAIIFVIDSGDKLRMVVAKEELDTLLNHPDIKHRRIPLLFFANKMDLRDALSAVKVSQLLCLENIKDKPWHICASDAVKGEGLLEGVDWLQDQIRAMKT.

G2 is lipidated: N-myristoyl glycine. GTP is bound by residues 24 to 31, T50, 69 to 73, G72, 130 to 133, and A164; these read GLDNSGKT, DMSGQ, and NKMD. T50 provides a ligand contact to Mg(2+).

Belongs to the small GTPase superfamily. Arf family. Expressed in brain, heart and eye. Isoform 2 is expressed only in the retina.

It localises to the cell projection. It is found in the cilium membrane. The protein localises to the cytoplasm. Its subcellular location is the cytoskeleton. The protein resides in the cilium axoneme. It localises to the cilium basal body. Functionally, probably involved in membrane protein trafficking at the base of the ciliary organelle. May function in cilia biogenesis. Isoform 2 is required for proper retinal function and organization. This chain is ADP-ribosylation factor-like protein 6 (arl6), found in Danio rerio (Zebrafish).